A 147-amino-acid polypeptide reads, in one-letter code: D-aminoacyl-tRNA deacylase (147 aa).

The Gly-cisPro motif, important for rejection of L-amino acids signature appears at 137–138 (GP).

This sequence belongs to the DTD family. Homodimer.

The protein localises to the cytoplasm. It catalyses the reaction glycyl-tRNA(Ala) + H2O = tRNA(Ala) + glycine + H(+). It carries out the reaction a D-aminoacyl-tRNA + H2O = a tRNA + a D-alpha-amino acid + H(+). Its function is as follows. An aminoacyl-tRNA editing enzyme that deacylates mischarged D-aminoacyl-tRNAs. Also deacylates mischarged glycyl-tRNA(Ala), protecting cells against glycine mischarging by AlaRS. Acts via tRNA-based rather than protein-based catalysis; rejects L-amino acids rather than detecting D-amino acids in the active site. By recycling D-aminoacyl-tRNA to D-amino acids and free tRNA molecules, this enzyme counteracts the toxicity associated with the formation of D-aminoacyl-tRNA entities in vivo and helps enforce protein L-homochirality. This chain is D-aminoacyl-tRNA deacylase, found in Jannaschia sp. (strain CCS1).